The sequence spans 329 residues: Glycerol-3-phosphate dehydrogenase [NAD(P)+] (329 aa).

Positions 10, 11, 31, and 105 each coordinate NADPH. Sn-glycerol 3-phosphate contacts are provided by Lys-105, Gly-134, and Ser-136. Residue Ala-138 coordinates NADPH. Residues Lys-189, Asp-242, Ser-252, Arg-253, and Asn-254 each contribute to the sn-glycerol 3-phosphate site. Lys-189 functions as the Proton acceptor in the catalytic mechanism. Position 253 (Arg-253) interacts with NADPH. Residues Val-277 and Glu-279 each contribute to the NADPH site.

The protein belongs to the NAD-dependent glycerol-3-phosphate dehydrogenase family.

Its subcellular location is the cytoplasm. The enzyme catalyses sn-glycerol 3-phosphate + NAD(+) = dihydroxyacetone phosphate + NADH + H(+). It catalyses the reaction sn-glycerol 3-phosphate + NADP(+) = dihydroxyacetone phosphate + NADPH + H(+). It participates in membrane lipid metabolism; glycerophospholipid metabolism. Functionally, catalyzes the reduction of the glycolytic intermediate dihydroxyacetone phosphate (DHAP) to sn-glycerol 3-phosphate (G3P), the key precursor for phospholipid synthesis. The protein is Glycerol-3-phosphate dehydrogenase [NAD(P)+] of Neisseria meningitidis serogroup A / serotype 4A (strain DSM 15465 / Z2491).